Consider the following 176-residue polypeptide: ATP synthase subunit b (176 aa).

The chain crosses the membrane as a helical span at residues 14–34 (STTLGTMIVVSGAFLILMLLL).

It belongs to the ATPase B chain family. In terms of assembly, F-type ATPases have 2 components, F(1) - the catalytic core - and F(0) - the membrane proton channel. F(1) has five subunits: alpha(3), beta(3), gamma(1), delta(1), epsilon(1). F(0) has three main subunits: a(1), b(2) and c(10-14). The alpha and beta chains form an alternating ring which encloses part of the gamma chain. F(1) is attached to F(0) by a central stalk formed by the gamma and epsilon chains, while a peripheral stalk is formed by the delta and b chains.

It localises to the cell membrane. F(1)F(0) ATP synthase produces ATP from ADP in the presence of a proton or sodium gradient. F-type ATPases consist of two structural domains, F(1) containing the extramembraneous catalytic core and F(0) containing the membrane proton channel, linked together by a central stalk and a peripheral stalk. During catalysis, ATP synthesis in the catalytic domain of F(1) is coupled via a rotary mechanism of the central stalk subunits to proton translocation. Its function is as follows. Component of the F(0) channel, it forms part of the peripheral stalk, linking F(1) to F(0). This Enterococcus faecalis (strain ATCC 700802 / V583) protein is ATP synthase subunit b.